A 325-amino-acid polypeptide reads, in one-letter code: ATPase ASNA1 homolog 2 (325 aa).

Residue Lys22 to Thr29 coordinates ATP. Asp51 is a catalytic residue. The ATP site is built by Glu231 and Asn258. The Zn(2+) site is built by Cys267 and Cys270.

It belongs to the arsA ATPase family. In terms of assembly, homodimer.

The protein localises to the cytoplasm. Its subcellular location is the endoplasmic reticulum. ATPase required for the post-translational delivery of tail-anchored (TA) proteins to the endoplasmic reticulum. Recognizes and selectively binds the transmembrane domain of TA proteins in the cytosol. This complex then targets to the endoplasmic reticulum by membrane-bound receptors, where the tail-anchored protein is released for insertion. This process is regulated by ATP binding and hydrolysis. ATP binding drives the homodimer towards the closed dimer state, facilitating recognition of newly synthesized TA membrane proteins. ATP hydrolysis is required for insertion. Subsequently, the homodimer reverts towards the open dimer state, lowering its affinity for the membrane-bound receptor, and returning it to the cytosol to initiate a new round of targeting. This chain is ATPase ASNA1 homolog 2, found in Paramecium tetraurelia.